Consider the following 543-residue polypeptide: Chaperonin GroEL (543 aa).

ATP contacts are provided by residues 29-32, 86-90, Gly413, 476-478, and Asp492; these read TLGP, DGTTT, and NAA.

Belongs to the chaperonin (HSP60) family. In terms of assembly, forms a cylinder of 14 subunits composed of two heptameric rings stacked back-to-back. Interacts with the co-chaperonin GroES.

Its subcellular location is the cytoplasm. It carries out the reaction ATP + H2O + a folded polypeptide = ADP + phosphate + an unfolded polypeptide.. In terms of biological role, together with its co-chaperonin GroES, plays an essential role in assisting protein folding. The GroEL-GroES system forms a nano-cage that allows encapsulation of the non-native substrate proteins and provides a physical environment optimized to promote and accelerate protein folding. The chain is Chaperonin GroEL from Streptococcus pyogenes serotype M49 (strain NZ131).